Reading from the N-terminus, the 154-residue chain is Style cell-cycle inhibitor 1-A (154 aa).

Basic and acidic residues-rich tracts occupy residues 1–11 (MGSDKKTPEEK) and 24–48 (DEVK…DKSK). Positions 1 to 84 (MGSDKKTPEE…DKSKNKFEEL (84 aa)) are disordered. A compositionally biased stretch (basic residues) spans 63–77 (GEKHKTKSHKHKDKS).

Specifically expressed in flowers pistils, especially in stigmas and styles. Barely detected in roots, stems, leaves, sepals, petals and stamen.

Its subcellular location is the nucleus. In terms of biological role, component of the auxin signaling transduction pathway that regulates cell proliferation and differentiation during flowers stigmas and styles development. Involved in the regulation of auxin-related genes. The protein is Style cell-cycle inhibitor 1-A of Nicotiana tabacum (Common tobacco).